The sequence spans 424 residues: UDP-N-acetylglucosamine 1-carboxyvinyltransferase (424 aa).

Residue 22–23 coordinates phosphoenolpyruvate; that stretch reads KN. UDP-N-acetyl-alpha-D-glucosamine is bound at residue arginine 93. Cysteine 117 functions as the Proton donor in the catalytic mechanism. 2-(S-cysteinyl)pyruvic acid O-phosphothioketal is present on cysteine 117. Residues 122–126, aspartate 307, and isoleucine 329 contribute to the UDP-N-acetyl-alpha-D-glucosamine site; that span reads RPVDL.

This sequence belongs to the EPSP synthase family. MurA subfamily.

It localises to the cytoplasm. It carries out the reaction phosphoenolpyruvate + UDP-N-acetyl-alpha-D-glucosamine = UDP-N-acetyl-3-O-(1-carboxyvinyl)-alpha-D-glucosamine + phosphate. It participates in cell wall biogenesis; peptidoglycan biosynthesis. Its function is as follows. Cell wall formation. Adds enolpyruvyl to UDP-N-acetylglucosamine. The sequence is that of UDP-N-acetylglucosamine 1-carboxyvinyltransferase from Chlorobaculum parvum (strain DSM 263 / NCIMB 8327) (Chlorobium vibrioforme subsp. thiosulfatophilum).